Reading from the N-terminus, the 1035-residue chain is Sulfite reductase [NADPH] flavoprotein component (1035 aa).

The FAD-binding FR-type domain occupies 648 to 879; it reads VKNFVVKVKE…VKPSVMKLPP (232 aa). Residues 684 to 695 and 814 to 824 each bind FAD; these read YDIGEALGIHAR and LKRREYSIASS.

The cofactor is FAD. FMN is required as a cofactor.

The enzyme catalyses hydrogen sulfide + 3 NADP(+) + 3 H2O = sulfite + 3 NADPH + 4 H(+). It participates in sulfur metabolism; hydrogen sulfide biosynthesis; hydrogen sulfide from sulfite (NADPH route): step 1/1. Functionally, this enzyme catalyzes the 6-electron reduction of sulfite to sulfide. This is one of several activities required for the biosynthesis of L-cysteine from sulfate. The protein is Sulfite reductase [NADPH] flavoprotein component (MET10) of Saccharomyces cerevisiae (strain ATCC 204508 / S288c) (Baker's yeast).